The primary structure comprises 207 residues: Small ribosomal subunit protein uS4 (207 aa).

The S4 RNA-binding domain occupies 97-160 (SRLDNVVYRM…KKQARIVEAL (64 aa)).

The protein belongs to the universal ribosomal protein uS4 family. Part of the 30S ribosomal subunit. Contacts protein S5. The interaction surface between S4 and S5 is involved in control of translational fidelity.

In terms of biological role, one of the primary rRNA binding proteins, it binds directly to 16S rRNA where it nucleates assembly of the body of the 30S subunit. With S5 and S12 plays an important role in translational accuracy. This is Small ribosomal subunit protein uS4 from Burkholderia pseudomallei (strain 1106a).